The primary structure comprises 197 residues: ATP-dependent Clp protease proteolytic subunit 1 (197 aa).

Residue His126 is part of the active site.

The protein belongs to the peptidase S14 family. As to quaternary structure, fourteen ClpP subunits assemble into 2 heptameric rings which stack back to back to give a disk-like structure with a central cavity, resembling the structure of eukaryotic proteasomes.

Its subcellular location is the cytoplasm. The catalysed reaction is Hydrolysis of proteins to small peptides in the presence of ATP and magnesium. alpha-casein is the usual test substrate. In the absence of ATP, only oligopeptides shorter than five residues are hydrolyzed (such as succinyl-Leu-Tyr-|-NHMec, and Leu-Tyr-Leu-|-Tyr-Trp, in which cleavage of the -Tyr-|-Leu- and -Tyr-|-Trp bonds also occurs).. Its function is as follows. Cleaves peptides in various proteins in a process that requires ATP hydrolysis. Has a chymotrypsin-like activity. Plays a major role in the degradation of misfolded proteins. This Nocardia farcinica (strain IFM 10152) protein is ATP-dependent Clp protease proteolytic subunit 1.